The sequence spans 44 residues: RACIELGEDCDGYKDDCQCCRDNAFCSCYEFFGEKNGCGCAVGH.

Intrachain disulfides connect C3-C20, C10-C26, C19-C40, and C28-C38.

In terms of tissue distribution, expressed by the venom gland.

Its subcellular location is the secreted. Functionally, omega-agatoxins are antagonists of voltage-sensitive calcium channels (Cav). Toxic to mice by intracerebroventricular injection. The sequence is that of U17-ctenitoxin-Co1a from Ctenus ornatus (Brazilian spider).